The chain runs to 1752 residues: Chitin synthase E (1752 aa).

Gly-1 to Thr-8 lines the ATP pocket. Residues Ser-492 to Asp-520 form a disordered region. Residues Leu-558–Asp-582 form an actin-binding region. A run of 2 helical transmembrane segments spans residues Trp-789–Gly-809 and Leu-828–Val-848. The Cytochrome b5 heme-binding domain occupies Gln-852–Ser-940. 2 N-linked (GlcNAc...) asparagine glycosylation sites follow: Asn-938 and Asn-963. Residues Phe-1099–Leu-1119 form a helical membrane-spanning segment. 3 N-linked (GlcNAc...) asparagine glycosylation sites follow: Asn-1322, Asn-1356, and Asn-1462. A run of 3 helical transmembrane segments spans residues Leu-1494–Val-1514, Ile-1520–Ile-1540, and Met-1547–Ser-1567. An N-linked (GlcNAc...) asparagine glycan is attached at Asn-1685. The DEK-C domain occupies Leu-1689–Pro-1744.

It in the N-terminal section; belongs to the TRAFAC class myosin-kinesin ATPase superfamily. Myosin family. This sequence in the C-terminal section; belongs to the chitin synthase family. Class V subfamily.

It is found in the cell membrane. The protein resides in the cell septum. Its subcellular location is the cell tip. It catalyses the reaction [(1-&gt;4)-N-acetyl-beta-D-glucosaminyl](n) + UDP-N-acetyl-alpha-D-glucosamine = [(1-&gt;4)-N-acetyl-beta-D-glucosaminyl](n+1) + UDP + H(+). Its function is as follows. Polymerizes chitin, a structural polymer of the cell wall and septum, by transferring the sugar moiety of UDP-GlcNAc to the non-reducing end of the growing chitin polymer. Important for hyphal growth and conidiophore development but not pathogenicity. The polypeptide is Chitin synthase E (Aspergillus fumigatus (Neosartorya fumigata)).